Reading from the N-terminus, the 332-residue chain is Cytoplasmic phosphatidylinositol transfer protein 1 (332 aa).

Phosphoserine occurs at positions 119, 270, and 274. Positions 267 to 285 (SVRSAPSSAPSTPLSTDAP) are enriched in low complexity. Positions 267–332 (SVRSAPSSAP…SDKPCRPKSE (66 aa)) are disordered. Residue T278 is modified to Phosphothreonine. Over residues 322 to 332 (SSDKPCRPKSE) the composition is skewed to basic and acidic residues.

The protein belongs to the PtdIns transfer protein family. PI transfer class IIB subfamily. In terms of tissue distribution, ubiquitously expressed.

The protein resides in the cytoplasm. The catalysed reaction is a 1,2-diacyl-sn-glycero-3-phospho-(1D-myo-inositol)(in) = a 1,2-diacyl-sn-glycero-3-phospho-(1D-myo-inositol)(out). It catalyses the reaction a 1,2-diacyl-sn-glycero-3-phosphate(in) = a 1,2-diacyl-sn-glycero-3-phosphate(out). Catalyzes the transfer of phosphatidylinositol (PI) and phosphatidic acid (PA) between membranes. Binds PA derived from the phospholipase D signaling pathway and among the cellular PA species, preferably binds to the C16:0/16:1 and C16:1/18:1 PA species. Functionally, catalyzes the transfer of phosphatidylinositol between membranes. This is Cytoplasmic phosphatidylinositol transfer protein 1 (PITPNC1) from Homo sapiens (Human).